Here is a 67-residue protein sequence, read N- to C-terminus: UPF0337 protein Atu4724 (67 aa).

The protein belongs to the UPF0337 (CsbD) family.

The protein is UPF0337 protein Atu4724 of Agrobacterium fabrum (strain C58 / ATCC 33970) (Agrobacterium tumefaciens (strain C58)).